The following is a 329-amino-acid chain: DNA-directed RNA polymerase subunit alpha (329 aa).

The interval Met1–Arg235 is alpha N-terminal domain (alpha-NTD). The alpha C-terminal domain (alpha-CTD) stretch occupies residues Phe249 to Asp329.

The protein belongs to the RNA polymerase alpha chain family. As to quaternary structure, homodimer. The RNAP catalytic core consists of 2 alpha, 1 beta, 1 beta' and 1 omega subunit. When a sigma factor is associated with the core the holoenzyme is formed, which can initiate transcription.

The enzyme catalyses RNA(n) + a ribonucleoside 5'-triphosphate = RNA(n+1) + diphosphate. DNA-dependent RNA polymerase catalyzes the transcription of DNA into RNA using the four ribonucleoside triphosphates as substrates. The polypeptide is DNA-directed RNA polymerase subunit alpha (Actinobacillus succinogenes (strain ATCC 55618 / DSM 22257 / CCUG 43843 / 130Z)).